The sequence spans 355 residues: Ubiquinone biosynthesis protein COQ4 homolog, mitochondrial (355 aa).

Positions 134, 135, 138, and 150 each coordinate Zn(2+).

It belongs to the COQ4 family. In terms of assembly, component of a multi-subunit COQ enzyme complex. The cofactor is Zn(2+).

Its subcellular location is the mitochondrion inner membrane. The catalysed reaction is a 4-hydroxy-3-methoxy-5-(all-trans-polyprenyl)benzoate + H(+) = a 2-methoxy-6-(all-trans-polyprenyl)phenol + CO2. Its pathway is cofactor biosynthesis; ubiquinone biosynthesis. Lyase that catalyzes the C1-decarboxylation of 4-hydroxy-3-methoxy-5-(all-trans-polyprenyl)benzoic acid into 2-methoxy-6-(all-trans-polyprenyl)phenol during ubiquinone biosynthesis. The chain is Ubiquinone biosynthesis protein COQ4 homolog, mitochondrial from Plasmodium knowlesi (strain H).